The following is a 196-amino-acid chain: Ribosomal RNA small subunit methyltransferase G (196 aa).

S-adenosyl-L-methionine contacts are provided by residues glycine 77, phenylalanine 82, 127–128 (AE), and arginine 140.

Belongs to the methyltransferase superfamily. RNA methyltransferase RsmG family.

The protein localises to the cytoplasm. Specifically methylates the N7 position of a guanine in 16S rRNA. The polypeptide is Ribosomal RNA small subunit methyltransferase G (Aquifex aeolicus (strain VF5)).